Reading from the N-terminus, the 331-residue chain is MNMIDPFGRTISYLRVSVTDRCDFRCTYCMAEDMAFLPKKDLLSLEELDRLCSVFIEKGVRRLRLTGGEPLVRKNIMHLVRQLSRHLDSGALEELTLTTNGSQLSRFAAELADCGVKRINVSLDTLDADKFHQITRWGHLDKVMQGIDAAQAAGLKVKLNAVALKDFNDAELPDMMRWAHGRGMDLTVIETMPMGEIDADRTDQYLPLSLLRASLERQFTLTDIPFKTGGPARYVHVAETGGKLGFITPMTHNFCESCNRVRLTCTGTLYMCLGQEDAADLRAPLRASEGNELVADAIDEAIGRKPKGHDFIIDRRTSRPSVSRHMSVTGG.

Residues 6 to 231 form the Radical SAM core domain; sequence PFGRTISYLR…TDIPFKTGGP (226 aa). Arg15 lines the GTP pocket. [4Fe-4S] cluster-binding residues include Cys22 and Cys26. Residue Tyr28 participates in S-adenosyl-L-methionine binding. Cys29 contacts [4Fe-4S] cluster. Arg64 is a GTP binding site. Gly68 is a binding site for S-adenosyl-L-methionine. Thr98 provides a ligand contact to GTP. Ser122 contributes to the S-adenosyl-L-methionine binding site. Lys158 provides a ligand contact to GTP. Met192 contributes to the S-adenosyl-L-methionine binding site. The [4Fe-4S] cluster site is built by Cys255 and Cys258. 260 to 262 contacts GTP; that stretch reads RVR. Cys272 serves as a coordination point for [4Fe-4S] cluster.

This sequence belongs to the radical SAM superfamily. MoaA family. As to quaternary structure, monomer and homodimer. [4Fe-4S] cluster serves as cofactor.

It catalyses the reaction GTP + AH2 + S-adenosyl-L-methionine = (8S)-3',8-cyclo-7,8-dihydroguanosine 5'-triphosphate + 5'-deoxyadenosine + L-methionine + A + H(+). It participates in cofactor biosynthesis; molybdopterin biosynthesis. Catalyzes the cyclization of GTP to (8S)-3',8-cyclo-7,8-dihydroguanosine 5'-triphosphate. The protein is GTP 3',8-cyclase of Mesorhizobium japonicum (strain LMG 29417 / CECT 9101 / MAFF 303099) (Mesorhizobium loti (strain MAFF 303099)).